A 186-amino-acid polypeptide reads, in one-letter code: GTP cyclohydrolase 1 1 (186 aa).

It belongs to the GTP cyclohydrolase I family. As to quaternary structure, homomer.

It carries out the reaction GTP + H2O = 7,8-dihydroneopterin 3'-triphosphate + formate + H(+). It functions in the pathway cofactor biosynthesis; 7,8-dihydroneopterin triphosphate biosynthesis; 7,8-dihydroneopterin triphosphate from GTP: step 1/1. The protein is GTP cyclohydrolase 1 1 (folE1) of Pseudomonas aeruginosa (strain ATCC 15692 / DSM 22644 / CIP 104116 / JCM 14847 / LMG 12228 / 1C / PRS 101 / PAO1).